The primary structure comprises 423 residues: Lipase member M (423 aa).

An N-terminal signal peptide occupies residues 1 to 33 (MLETLSRQWIVSHRMEMWLLILVAYMFQRNVNS). A glycan (N-linked (GlcNAc...) asparagine) is linked at Asn48. In terms of domain architecture, AB hydrolase-1 spans 92 to 392 (PVVLLQHGLV…EWAHVDFIWG (301 aa)). Residue Ser186 is the Nucleophile of the active site. Residues Cys260 and Cys269 are joined by a disulfide bond. Catalysis depends on charge relay system residues Asp357 and His386.

It belongs to the AB hydrolase superfamily. Lipase family. Exclusively expressed in the epidermis within the granular keratinocytes.

The protein resides in the secreted. Plays a highly specific role in the last step of keratinocyte differentiation. May have an essential function in lipid metabolism of the most differentiated epidermal layers. This Homo sapiens (Human) protein is Lipase member M (LIPM).